We begin with the raw amino-acid sequence, 189 residues long: MAEINLFEKYSYEEVKVNNVSLRPYINLSRRGIVPHAATTITKGTTGKARIPIAERFVCSLMRHGRNSGKKRLAINIFEDACFIIHSMTKKNPLQVLVDAIVNSGPREDTARIGRAGSMRRTSVDVSPLKRISIAISNLSAGIRNASFRNRITLAEAIANELIAASTNSQNSYAVNKKKEIERIAQSNR.

It belongs to the universal ribosomal protein uS7 family. As to quaternary structure, component of the small ribosomal subunit.

Its subcellular location is the cytoplasm. The chain is Small ribosomal subunit protein uS7 (RPS5) from Encephalitozoon cuniculi (strain GB-M1) (Microsporidian parasite).